The sequence spans 201 residues: Imidazole glycerol phosphate synthase subunit HisH (201 aa).

Positions 1 to 201 (MVFIADYGAG…LQVLKNFAEF (201 aa)) constitute a Glutamine amidotransferase type-1 domain. Catalysis depends on Cys-79, which acts as the Nucleophile. Catalysis depends on residues His-183 and Glu-185.

In terms of assembly, heterodimer of HisH and HisF.

The protein localises to the cytoplasm. The enzyme catalyses 5-[(5-phospho-1-deoxy-D-ribulos-1-ylimino)methylamino]-1-(5-phospho-beta-D-ribosyl)imidazole-4-carboxamide + L-glutamine = D-erythro-1-(imidazol-4-yl)glycerol 3-phosphate + 5-amino-1-(5-phospho-beta-D-ribosyl)imidazole-4-carboxamide + L-glutamate + H(+). It carries out the reaction L-glutamine + H2O = L-glutamate + NH4(+). The protein operates within amino-acid biosynthesis; L-histidine biosynthesis; L-histidine from 5-phospho-alpha-D-ribose 1-diphosphate: step 5/9. In terms of biological role, IGPS catalyzes the conversion of PRFAR and glutamine to IGP, AICAR and glutamate. The HisH subunit catalyzes the hydrolysis of glutamine to glutamate and ammonia as part of the synthesis of IGP and AICAR. The resulting ammonia molecule is channeled to the active site of HisF. This chain is Imidazole glycerol phosphate synthase subunit HisH, found in Chlorobaculum tepidum (strain ATCC 49652 / DSM 12025 / NBRC 103806 / TLS) (Chlorobium tepidum).